The following is a 496-amino-acid chain: Protein nucleotidyltransferase YdiU (496 aa).

Residues Gly98, Gly100, Arg101, Lys116, Asp128, Gly129, Arg179, and Arg186 each contribute to the ATP site. The Proton acceptor role is filled by Asp259. Mg(2+) contacts are provided by Asn260 and Asp269. Position 269 (Asp269) interacts with ATP.

It belongs to the SELO family. Requires Mg(2+) as cofactor. The cofactor is Mn(2+).

It carries out the reaction L-seryl-[protein] + ATP = 3-O-(5'-adenylyl)-L-seryl-[protein] + diphosphate. The catalysed reaction is L-threonyl-[protein] + ATP = 3-O-(5'-adenylyl)-L-threonyl-[protein] + diphosphate. The enzyme catalyses L-tyrosyl-[protein] + ATP = O-(5'-adenylyl)-L-tyrosyl-[protein] + diphosphate. It catalyses the reaction L-histidyl-[protein] + UTP = N(tele)-(5'-uridylyl)-L-histidyl-[protein] + diphosphate. It carries out the reaction L-seryl-[protein] + UTP = O-(5'-uridylyl)-L-seryl-[protein] + diphosphate. The catalysed reaction is L-tyrosyl-[protein] + UTP = O-(5'-uridylyl)-L-tyrosyl-[protein] + diphosphate. Functionally, nucleotidyltransferase involved in the post-translational modification of proteins. It can catalyze the addition of adenosine monophosphate (AMP) or uridine monophosphate (UMP) to a protein, resulting in modifications known as AMPylation and UMPylation. The sequence is that of Protein nucleotidyltransferase YdiU from Albidiferax ferrireducens (strain ATCC BAA-621 / DSM 15236 / T118) (Rhodoferax ferrireducens).